The primary structure comprises 379 residues: Cyclic dinucleotide synthase CdnE (379 aa).

Residues Gln107, Ser109, Asp123, and Lys179 each coordinate UTP. Mg(2+) is bound at residue Asp123. Asp193 serves as a coordination point for Mg(2+). The UTP site is built by Asn229, Lys257, and Ser274. The Pyrimidine specificity motif (R/Q)xW in donor pocket motif lies at 328-330 (KIF).

It belongs to the CD-NTase family. E02 subfamily. It depends on Mg(2+) as a cofactor.

It catalyses the reaction 2 UTP = c-di-UMP + 2 diphosphate. The catalysed reaction is UTP + ATP = 3',3'-cUAMP + 2 diphosphate. The enzyme catalyses UTP + CTP = cyclic CMP-UMP + 2 diphosphate. Its function is as follows. Cyclic nucleotide synthase (second messenger synthase) of a CBASS antivirus system. CBASS (cyclic oligonucleotide-based antiphage signaling system) provides immunity against bacteriophage. The CD-NTase protein synthesizes cyclic nucleotides in response to infection; these serve as specific second messenger signals. The signals activate a diverse range of effectors, leading to bacterial cell death and thus abortive phage infection. The effector protein for this system is membrane protein Cap15. A type I-B(UU) CBASS system. Cyclic dinucleotide synthase that preferentially catalyzes the synthesis of 3',3'-cyclic UMP-UMP (c-di-UMP) and 3',3'-cyclic UMP-AMP, with minor amounts of 3',3'-cyclic UMP-CMP, which are second messengers for cell signal transduction. Functionally, protects E.coli against phage infection. When the CBASS operon (cap15-cdnE) is introduced in E.coli MG1655 it protects against phages T2, T4, T5, T6, SECPhi4, SECPhi6, SECPhi17, SECPhi18 and SECPhi27, but not against phage T7. The polypeptide is Cyclic dinucleotide synthase CdnE (Yersinia aleksiciae).